A 243-amino-acid polypeptide reads, in one-letter code: Methylthioribulose-1-phosphate dehydratase (243 aa).

Cys90 contacts substrate. Zn(2+) contacts are provided by His108 and His110. The active-site Proton donor/acceptor is Glu131. His193 is a binding site for Zn(2+).

Belongs to the aldolase class II family. MtnB subfamily. It depends on Zn(2+) as a cofactor.

Its subcellular location is the cytoplasm. It carries out the reaction 5-(methylsulfanyl)-D-ribulose 1-phosphate = 5-methylsulfanyl-2,3-dioxopentyl phosphate + H2O. It participates in amino-acid biosynthesis; L-methionine biosynthesis via salvage pathway; L-methionine from S-methyl-5-thio-alpha-D-ribose 1-phosphate: step 2/6. Functionally, catalyzes the dehydration of methylthioribulose-1-phosphate (MTRu-1-P) into 2,3-diketo-5-methylthiopentyl-1-phosphate (DK-MTP-1-P). This Zygosaccharomyces rouxii (strain ATCC 2623 / CBS 732 / NBRC 1130 / NCYC 568 / NRRL Y-229) protein is Methylthioribulose-1-phosphate dehydratase.